Consider the following 435-residue polypeptide: 5-methylthioadenosine/S-adenosylhomocysteine deaminase (435 aa).

The Zn(2+) site is built by His65 and His67. Substrate contacts are provided by Glu94, Arg150, and His189. Position 216 (His216) interacts with Zn(2+). 2 residues coordinate substrate: Glu219 and Asp304. Zn(2+) is bound at residue Asp304.

It belongs to the metallo-dependent hydrolases superfamily. MTA/SAH deaminase family. It depends on Zn(2+) as a cofactor.

It catalyses the reaction S-adenosyl-L-homocysteine + H2O + H(+) = S-inosyl-L-homocysteine + NH4(+). It carries out the reaction S-methyl-5'-thioadenosine + H2O + H(+) = S-methyl-5'-thioinosine + NH4(+). Catalyzes the deamination of 5-methylthioadenosine and S-adenosyl-L-homocysteine into 5-methylthioinosine and S-inosyl-L-homocysteine, respectively. Is also able to deaminate adenosine. The chain is 5-methylthioadenosine/S-adenosylhomocysteine deaminase from Bacillus cereus (strain ATCC 10987 / NRS 248).